A 386-amino-acid chain; its full sequence is Prostacyclin receptor (386 aa).

The Extracellular segment spans residues 1–16 (MADSCRNLTYVRGSVG). Cystine bridges form between C5–C165 and C92–C170. N7 carries N-linked (GlcNAc...) asparagine glycosylation. A helical transmembrane segment spans residues 17–38 (PATSTLMFVAGVVGNGLALGIL). The Cytoplasmic segment spans residues 39 to 51 (SARRPARPSAFAV). Residues 52–76 (LVTGLAATDLLGTSFLSPAVFVAYA) traverse the membrane as a helical segment. Over 77-94 (RNSSLLGLARGGPALCDA) the chain is Extracellular. A helical transmembrane segment spans residues 95 to 115 (FAFAMTFFGLASMLILFAMAV). Residues 116–134 (ERCLALSHPYLYAQLDGPR) lie on the Cytoplasmic side of the membrane. The helical transmembrane segment at 135 to 158 (CARLALPAIYAFCVLFCALPLLGL) threads the bilayer. Residues 159–181 (GQHQQYCPGSWCFLRMRWAQPGG) lie on the Extracellular side of the membrane. A helical membrane pass occupies residues 182 to 208 (AAFSLAYAGLVALLVAAIFLCNGSVTL). Residues 209-235 (SLCRMYRQQKRHQGSLGPRPRTGEDEV) are Cytoplasmic-facing. Residues 236-260 (DHLILLALMTVVMAVCSLPLTIRCF) traverse the membrane as a helical segment. Residues 261–274 (TQAVAPDSSSEMGD) are Extracellular-facing. A helical membrane pass occupies residues 275–295 (LLAFRFYAFNPILDPWVFILF). At 296 to 386 (RKAVFQRLKL…AEASVACSLC (91 aa)) the chain is on the cytoplasmic side. Residues 322-376 (PLSQLASGRRDPRAPSAPVGKEGSCVPLSAWGEGQVEPLPPTQQSSGSAVGTSSK) form a disordered region. Polar residues predominate over residues 363–376 (TQQSSGSAVGTSSK). Cysteine methyl ester is present on C383. A lipid anchor (S-farnesyl cysteine) is attached at C383. Residues 384–386 (SLC) constitute a propeptide, removed in mature form.

Belongs to the G-protein coupled receptor 1 family. As to quaternary structure, interacts (non-isoprenylated C-terminus) with PDZK1. In terms of processing, isoprenylation does not influence ligand binding but is required for efficient coupling to the effectors adenylyl cyclase and phospholipase C.

It is found in the cell membrane. Its function is as follows. Receptor for prostacyclin (prostaglandin I2 or PGI2). The activity of this receptor is mediated by G(s) proteins which activate adenylate cyclase. This chain is Prostacyclin receptor (PTGIR), found in Homo sapiens (Human).